We begin with the raw amino-acid sequence, 307 residues long: 2-dehydropantoate 2-reductase (307 aa).

NADP(+)-binding positions include Gly-7–Gly-12, Asn-102, and Ala-128. Asn-102 provides a ligand contact to substrate. Lys-184 functions as the Proton donor in the catalytic mechanism. Asn-188, Asn-192, and Ser-255 together coordinate substrate. Glu-268 is a binding site for NADP(+).

It belongs to the ketopantoate reductase family.

The protein resides in the cytoplasm. The enzyme catalyses (R)-pantoate + NADP(+) = 2-dehydropantoate + NADPH + H(+). The protein operates within cofactor biosynthesis; (R)-pantothenate biosynthesis; (R)-pantoate from 3-methyl-2-oxobutanoate: step 2/2. In terms of biological role, catalyzes the NADPH-dependent reduction of ketopantoate into pantoic acid. The sequence is that of 2-dehydropantoate 2-reductase (apbA) from Streptococcus pyogenes serotype M6 (strain ATCC BAA-946 / MGAS10394).